Reading from the N-terminus, the 365-residue chain is 2-aminoethylphosphonate--pyruvate transaminase (365 aa).

K194 bears the N6-(pyridoxal phosphate)lysine mark.

It belongs to the class-V pyridoxal-phosphate-dependent aminotransferase family. PhnW subfamily. Homodimer. It depends on pyridoxal 5'-phosphate as a cofactor.

The enzyme catalyses (2-aminoethyl)phosphonate + pyruvate = phosphonoacetaldehyde + L-alanine. In terms of biological role, involved in phosphonate degradation. The protein is 2-aminoethylphosphonate--pyruvate transaminase of Bacillus cereus (strain Q1).